Consider the following 786-residue polypeptide: Toll-like receptor 1 (786 aa).

The signal sequence occupies residues 1–24 (MTSIFHFAIIFMLILQIRIQLSEE). Residues 25–580 (SEFLVDRSKN…HMSELSCNIT (556 aa)) are Extracellular-facing. A glycan (N-linked (GlcNAc...) asparagine) is linked at N51. LRR repeat units follow at residues 54-77 (QNYI…LIIS), 78-101 (HNRI…LDLS), 102-125 (HNKL…SFNA), 126-150 (FDAL…STTH), 151-175 (LEKS…GETY), 176-199 (GEKE…FPTN), 200-223 (KEFH…NIKC), 224-250 (VLED…SNLT), 251-278 (LNNI…YFSI), 279-308 (SNVK…HQVV), 309-337 (SDVF…SGTR), 338-361 (MVHM…NLLT), 362-388 (DTVF…KELS), 389-414 (KIAE…SYDE), 415-437 (KKGD…ILTD), 438-457 (TIFR…SNKI), 458-478 (KSIP…VAFN), 479-500 (SLTD…IDHN), and 501-524 (SVSH…AGDN). C110 and C132 are oxidised to a cystine. N-linked (GlcNAc...) asparagine glycosylation is found at N137 and N163. An intrachain disulfide couples C223 to C230. The tract at residues 313–316 (GFPQ) is interaction with bacterial lipopeptide. N330 carries N-linked (GlcNAc...) asparagine glycosylation. A disulfide bond links C343 and C368. C419 and C442 are joined by a disulfide. N429 is a glycosylation site (N-linked (GlcNAc...) asparagine). Residues 525–579 (PFQCTCELGEFVKNIDQVSSEVLEGWPDSYKCDYPESYRGTLLKDFHMSELSCNI) enclose the LRRCT domain. N-linked (GlcNAc...) asparagine glycosylation is present at N578. A helical transmembrane segment spans residues 581 to 601 (LLIVTIVATMLVLAVTVTSLC). Over 602 to 786 (SYLDLPWYLR…NIKLTEQAKK (185 aa)) the chain is Cytoplasmic. The region spanning 635–776 (LQFHAFISYS…LFWANLRAAI (142 aa)) is the TIR domain.

It belongs to the Toll-like receptor family. As to quaternary structure, interacts (via extracellular domain) with TLR2. TLR2 seems to exist in heterodimers with either TLR1 or TLR6 before stimulation by the ligand. The heterodimers form bigger oligomers in response to their corresponding ligands as well as further heterotypic associations with other receptors such as CD14 and/or CD36. The activation cluster TLR2:TLR1:CD14 forms in response to triacylated lipopeptides. Binds MYD88 (via TIR domain). Interacts with CNPY3. Interacts with neutrophil recruitment protein from Aedes aegypti saliva; the interaction probably promotes activation of canonical NF-kappa-B signaling in skin-resident macrophages and subsequent expression of neutrophil chemoattractants. Ubiquitous. Highly expressed in spleen, ovary, peripheral blood leukocytes, thymus and small intestine.

It is found in the cell membrane. The protein localises to the cytoplasmic vesicle. It localises to the phagosome membrane. Its subcellular location is the membrane raft. The protein resides in the golgi apparatus. In terms of biological role, participates in the innate immune response to microbial agents. Specifically recognizes diacylated and triacylated lipopeptides. Cooperates with TLR2 to mediate the innate immune response to bacterial lipoproteins or lipopeptides. Forms the activation cluster TLR2:TLR1:CD14 in response to triacylated lipopeptides, this cluster triggers signaling from the cell surface and subsequently is targeted to the Golgi in a lipid-raft dependent pathway. Acts via MYD88 and TRAF6, leading to NF-kappa-B activation, cytokine secretion and the inflammatory response. This is Toll-like receptor 1 (TLR1) from Homo sapiens (Human).